A 630-amino-acid polypeptide reads, in one-letter code: Sodium-dependent serotonin transporter (630 aa).

At 1-87 (METTPLNSQK…ERETWGKKVD (87 aa)) the chain is on the cytoplasmic side. Residues 31–59 (VPTPGDKVESGQISNGYSAVPSPGAGDDT) form a disordered region. A Phosphotyrosine modification is found at Tyr-47. The helical transmembrane segment at 88 to 112 (FLLSVIGYAVDLGNVWRFPYICYQN) threads the bilayer. 5 residues coordinate Na(+): Gly-94, Ala-96, Val-97, Asp-98, and Asn-101. Asp-98 serves as a coordination point for serotonin. Residues 113–115 (GGG) are Extracellular-facing. A helical membrane pass occupies residues 116–135 (AFLIPYTIMAIFGGIPLFYM). Residues 136-160 (ELALGQYHRNGCISIWRKICPIFKG) are Cytoplasmic-facing. At Tyr-142 the chain carries Phosphotyrosine. The helical transmembrane segment at 161 to 186 (IGYAICIIAFYIASYYNTIMAWALYY) threads the bilayer. The Extracellular segment spans residues 187 to 252 (LISSFTDQLP…KGLQDLGGIS (66 aa)). Residues Cys-200 and Cys-209 are joined by a disulfide bond. 2 N-linked (GlcNAc...) asparagine glycosylation sites follow: Asn-208 and Asn-217. A helical membrane pass occupies residues 253 to 271 (WQLALCIMLIFTVIYFSIW). Residues 272–277 (KGVKTS) are Cytoplasmic-facing. Residue Thr-276 is modified to Phosphothreonine. The helical transmembrane segment at 278–297 (GKVVWVTATFPYIILSVLLV) threads the bilayer. Topologically, residues 298–324 (RGATLPGAWRGVLFYLKPNWQKLLETG) are extracellular. Residues 325 to 347 (VWIDAAAQIFFSLGPGFGVLLAF) traverse the membrane as a helical segment. Ser-336 provides a ligand contact to Na(+). Residues 348–360 (ASYNKFNNNCYQD) are Cytoplasmic-facing. The chain crosses the membrane as a helical span at residues 361-380 (ALVTSVVNCMTSFVSGFVIF). Na(+) is bound at residue Asn-368. Over 381 to 421 (TVLGYMAEMRNEDVSEVAKDAGPSLLFITYAEAIANMPAST) the chain is Extracellular. A helical membrane pass occupies residues 422–443 (FFAIIFFLMLITLGLDSTFAGL). Na(+)-binding residues include Leu-434, Asp-437, and Ser-438. Thr-439 serves as a coordination point for serotonin. Topologically, residues 444-463 (EGVITAVLDEFPHIWAKRRE) are cytoplasmic. A helical membrane pass occupies residues 464–483 (WFVLAVVITCFFGSLVTLTF). Residues 484–494 (GGAYVVKLLEE) are Extracellular-facing. Serotonin-binding residues include Glu-494 and Tyr-495. Residues 495–516 (YATGPAVLTVALIEAVAVSWFY) form a helical membrane-spanning segment. At 517-538 (GITQFCRDVKEMLGFSPGWFWR) the chain is on the cytoplasmic side. Residues 539 to 558 (ICWVAISPLFLLFIICSFLM) form a helical membrane-spanning segment. Residues Phe-556 and Ser-559 each coordinate serotonin. The Extracellular segment spans residues 559–574 (SPPQLRLFQYNYPHWS). A helical membrane pass occupies residues 575-595 (IILGYCIGTSSFVCIPTYIAY). The Cytoplasmic portion of the chain corresponds to 596-630 (RLISTPGTFKERIIKSITPETPTEIPCGDVRLNAV). The tract at residues 616–624 (TPTEIPCGD) is interaction with RAB4A.

This sequence belongs to the sodium:neurotransmitter symporter (SNF) (TC 2.A.22) family. SLC6A4 subfamily. As to quaternary structure, monomer or homooligomer. Interacts (via C-terminus) with SCAMP2; the interaction is direct and retains transporter molecules intracellularly. Interacts with filamentous actin and STX1A. Interacts (via the N-terminus) with STX1A (via the H3 domain); this interaction regulates SLC4A6 channel conductance. Interacts with SEC23A, SEC24C and PATJ. Interacts with NOS1; the interaction may diminish the cell surface localization of SERT in the brain and, correspondingly, reduce serotonin reuptake. Interacts with TGFB1I1. Interacts with ITGAV:ITGB3. Interacts (via C-terminus) with ITGB3; this interaction regulates SLC6A4 trafficking. In terms of processing, phosphorylation at Thr-276 increases 5-HT uptake and is required for cGMP-mediated SERT regulation.

It is found in the cell membrane. It localises to the endomembrane system. Its subcellular location is the endosome membrane. The protein localises to the synapse. The protein resides in the cell junction. It is found in the focal adhesion. It localises to the cell projection. Its subcellular location is the neuron projection. The enzyme catalyses serotonin(out) + K(+)(in) + Na(+)(out) + H(+)(in) = serotonin(in) + K(+)(out) + Na(+)(in) + H(+)(out). In terms of biological role, serotonin transporter that cotransports serotonin with one Na(+) ion in exchange for one K(+) ion and possibly one proton in an overall electroneutral transport cycle. Transports serotonin across the plasma membrane from the extracellular compartment to the cytosol thus limiting serotonin intercellular signaling. Essential for serotonin homeostasis in the central nervous system. In the developing somatosensory cortex, acts in glutamatergic neurons to control serotonin uptake and its trophic functions accounting for proper spatial organization of cortical neurons and elaboration of sensory circuits. In the mature cortex, acts primarily in brainstem raphe neurons to mediate serotonin uptake from the synaptic cleft back into the pre-synaptic terminal thus terminating serotonin signaling at the synapse. Modulates mucosal serotonin levels in the gastrointestinal tract through uptake and clearance of serotonin in enterocytes. Required for enteric neurogenesis and gastrointestinal reflexes. Regulates blood serotonin levels by ensuring rapid high affinity uptake of serotonin from plasma to platelets, where it is further stored in dense granules via vesicular monoamine transporters and then released upon stimulation. Mechanistically, the transport cycle starts with an outward-open conformation having Na1(+) and Cl(-) sites occupied. The binding of a second extracellular Na2(+) ion and serotonin substrate leads to structural changes to outward-occluded to inward-occluded to inward-open, where the Na2(+) ion and serotonin are released into the cytosol. Binding of intracellular K(+) ion induces conformational transitions to inward-occluded to outward-open and completes the cycle by releasing K(+) possibly together with a proton bound to Asp-98 into the extracellular compartment. Na1(+) and Cl(-) ions remain bound throughout the transport cycle. Additionally, displays serotonin-induced channel-like conductance for monovalent cations, mainly Na(+) ions. The channel activity is uncoupled from the transport cycle and may contribute to the membrane resting potential or excitability. This chain is Sodium-dependent serotonin transporter (SLC6A4), found in Macaca mulatta (Rhesus macaque).